A 411-amino-acid chain; its full sequence is Phosphoglycerate kinase (411 aa).

Substrate contacts are provided by residues 28 to 30, Arg45, 68 to 71, Arg125, and Arg165; these read DIN and HQSR. ATP-binding positions include Glu338 and 364–367; that span reads GGHL.

It belongs to the phosphoglycerate kinase family. As to quaternary structure, homodimer.

It localises to the cytoplasm. The catalysed reaction is (2R)-3-phosphoglycerate + ATP = (2R)-3-phospho-glyceroyl phosphate + ADP. Its pathway is carbohydrate degradation; glycolysis; pyruvate from D-glyceraldehyde 3-phosphate: step 2/5. This Methanothermobacter thermautotrophicus (strain ATCC 29096 / DSM 1053 / JCM 10044 / NBRC 100330 / Delta H) (Methanobacterium thermoautotrophicum) protein is Phosphoglycerate kinase (pgk).